The sequence spans 234 residues: Phosphoglycolate phosphatase (234 aa).

Catalysis depends on D9, which acts as the Nucleophile. Residues D9 and D11 each coordinate Mg(2+). K162 is a substrate binding site. Mg(2+) is bound by residues D185 and D189.

The protein belongs to the archaeal SPP-like hydrolase family. Requires Mg(2+) as cofactor.

The catalysed reaction is 2-phosphoglycolate + H2O = glycolate + phosphate. Its function is as follows. Catalyzes the dephosphorylation of 2-phosphoglycolate. This chain is Phosphoglycolate phosphatase, found in Methanobrevibacter smithii (strain ATCC 35061 / DSM 861 / OCM 144 / PS).